Reading from the N-terminus, the 709-residue chain is Elongation factor G (709 aa).

A tr-type G domain is found at 10–286 (NKVRNIGIMA…AVVDFLPSPL (277 aa)). Residues 19–26 (AHIDAGKT), 83–87 (DTPGH), and 137–140 (NKMD) contribute to the GTP site.

The protein belongs to the TRAFAC class translation factor GTPase superfamily. Classic translation factor GTPase family. EF-G/EF-2 subfamily.

The protein localises to the cytoplasm. Functionally, catalyzes the GTP-dependent ribosomal translocation step during translation elongation. During this step, the ribosome changes from the pre-translocational (PRE) to the post-translocational (POST) state as the newly formed A-site-bound peptidyl-tRNA and P-site-bound deacylated tRNA move to the P and E sites, respectively. Catalyzes the coordinated movement of the two tRNA molecules, the mRNA and conformational changes in the ribosome. The polypeptide is Elongation factor G (Corynebacterium glutamicum (strain R)).